Here is an 80-residue protein sequence, read N- to C-terminus: NADH-ubiquinone oxidoreductase chain 5 (80 aa).

Transmembrane regions (helical) follow at residues 4–24 (ISFL…LNFM) and 44–64 (IVMT…VLLI).

Belongs to the complex I subunit 5 family.

It is found in the mitochondrion inner membrane. It catalyses the reaction a ubiquinone + NADH + 5 H(+)(in) = a ubiquinol + NAD(+) + 4 H(+)(out). Functionally, core subunit of the mitochondrial membrane respiratory chain NADH dehydrogenase (Complex I) that is believed to belong to the minimal assembly required for catalysis. Complex I functions in the transfer of electrons from NADH to the respiratory chain. The immediate electron acceptor for the enzyme is believed to be ubiquinone. The sequence is that of NADH-ubiquinone oxidoreductase chain 5 (ND5) from Ceratitis capitata (Mediterranean fruit fly).